The sequence spans 553 residues: Putative transport protein YidE (553 aa).

5 helical membrane passes run 4-24 (IALT…IGNV), 28-48 (GVGL…HFVS), 65-85 (FGLI…FFAS), 95-115 (LFAV…HKLF), and 158-178 (MSYA…MWML). RCK C-terminal domains follow at residues 191–276 (QQHE…VIGQ) and 279–361 (DTSL…VLGN). 6 consecutive transmembrane segments (helical) span residues 371-391 (MLPV…PVFV), 393-413 (GFPA…ALIL), 439-459 (IVLF…HTLV), 464-484 (LSWI…VGIL), 493-513 (YLTM…LAFA), and 533-553 (LVMF…WSIG).

It belongs to the AAE transporter (TC 2.A.81) family. YidE subfamily.

It is found in the cell membrane. In Escherichia coli O6:K15:H31 (strain 536 / UPEC), this protein is Putative transport protein YidE.